We begin with the raw amino-acid sequence, 1413 residues long: Sushi, nidogen and EGF-like domain-containing protein 1 (1413 aa).

A signal peptide spans 1–24 (MRHGVAWALLVAAALGLGARGVRG). The NIDO domain occupies 103-258 (AFWADVDNRR…GRWAFRIDDA (156 aa)). 2 N-linked (GlcNAc...) asparagine glycosylation sites follow: Asn145 and Asn204. EGF-like domains follow at residues 268–309 (TTSV…RRCH), 311–347 (DVNECASQPCQNGGTCTHGINSFRCQCPAGFGGPTCE), and 349–385 (AQSPCDTKECQHGGQCQVENGSAVCVCQAGYTGAACE). Disulfide bonds link Cys272/Cys284, Cys278/Cys297, Cys299/Cys308, Cys315/Cys326, Cys320/Cys335, Cys337/Cys346, Cys353/Cys364, Cys358/Cys373, Cys375/Cys384, Cys391/Cys402, Cys396/Cys411, Cys413/Cys422, Cys433/Cys444, Cys438/Cys453, Cys455/Cys464, Cys472/Cys480, Cys474/Cys488, and Cys490/Cys499. A glycan (N-linked (GlcNAc...) asparagine) is linked at Asn292. Residues 352–374 (PCDTKECQHGGQCQVENGSAVCV) enclose the Follistatin-like 1 domain. A glycan (N-linked (GlcNAc...) asparagine) is linked at Asn368. In terms of domain architecture, EGF-like 4; calcium-binding spans 387–423 (DVDDCSPDPCLNGGSCVDLVGNYTCLCAEPFKGLRCE). N-linked (GlcNAc...) asparagine glycosylation is present at Asn408. 2 EGF-like domains span residues 429–465 (VPDACLSAPCHNGGTCVDADQGYVCECPEGFMGLDCR) and 468–500 (VPDDCECRNGGRCLGANTTLCQCPLGFFGLLCE). Residue Asn484 is glycosylated (N-linked (GlcNAc...) asparagine). Residues 507 to 530 (PCNMNTQCPDGGYCMEHGGSYLCV) form the Follistatin-like 2 domain. A glycan (N-linked (GlcNAc...) asparagine) is linked at Asn536. EGF-like domains lie at 541-577 (LPSPCDSDPCFNGGSCDAHDDSYTCECPRGFHGKHCE), 580-616 (RPHLCSSGPCRNGGTCKEAGGEYHCSCPYRFTGRHCE), 619-655 (KPDSCASGPCHNGGTCFHYIGKYKCDCPPGFSGRHCE), and 657-693 (APSPCFRSPCVNGGTCEDRDTDFFCHCQAGYMGRRCQ). 26 cysteine pairs are disulfide-bonded: Cys545/Cys556, Cys550/Cys565, Cys567/Cys576, Cys584/Cys595, Cys589/Cys604, Cys606/Cys615, Cys623/Cys634, Cys628/Cys643, Cys645/Cys654, Cys661/Cys672, Cys666/Cys681, Cys683/Cys692, Cys698/Cys739, Cys724/Cys751, Cys757/Cys768, Cys762/Cys777, Cys779/Cys788, Cys795/Cys806, Cys800/Cys815, Cys817/Cys826, Cys833/Cys844, Cys838/Cys853, Cys855/Cys864, Cys871/Cys882, Cys876/Cys891, and Cys893/Cys902. A Sushi domain is found at 696 to 753 (VDCGPPEEVKHATLRFNGTRLGAVALYACDRGYSLSAPSRIRVCQPHGVWSEPPQCLE). N-linked (GlcNAc...) asparagine glycosylation is present at Asn712. An EGF-like 11; calcium-binding domain is found at 753–789 (EIDECRSQPCLHGGSCQDRVAGYLCLCSTGYEGAHCE). Residues 791–827 (ERDECRAHPCRNGGSCRNLPGAYVCRCPAGFVGVHCE) form the EGF-like 12; calcium-binding domain. EGF-like domains are found at residues 829–865 (EVDACDSSPCQHGGRCESGGGAYLCVCPESFFGYHCE) and 867–903 (VSDPCFSSPCGGRGYCLASNGSHSCTCKVGYTGEDCA). The N-linked (GlcNAc...) asparagine glycan is linked to Asn886. Fibronectin type-III domains are found at residues 908-1006 (PPTA…TRPR), 1007-1105 (PVEG…TRPL), and 1106-1200 (PPAN…SPRD). Residues Asn977, Asn1015, Asn1109, and Asn1139 are each glycosylated (N-linked (GlcNAc...) asparagine). A disordered region spans residues 1206–1226 (WHQGGHHPRVLKNRPPPARLP). Positions 1207–1217 (HQGGHHPRVLK) are enriched in basic residues. In terms of domain architecture, EGF-like 15 spans 1307 to 1343 (VPGNCSENPCQNGGTCVPGADAHSCDCGPGFKGRRCE). Asn1310 carries N-linked (GlcNAc...) asparagine glycosylation. 3 disulfide bridges follow: Cys1311–Cys1322, Cys1316–Cys1331, and Cys1333–Cys1342. Residues 1394–1413 (TSLKKTPNRKQSKSQTLEKS) are disordered.

Phosphorylated on serine and threonine residues. In terms of processing, N-glycosylated.

It is found in the secreted. It localises to the extracellular space. The protein localises to the extracellular matrix. The polypeptide is Sushi, nidogen and EGF-like domain-containing protein 1 (Homo sapiens (Human)).